We begin with the raw amino-acid sequence, 486 residues long: UDP-N-acetylmuramate--L-alanine ligase (486 aa).

Gly-126–Ser-132 contacts ATP.

This sequence belongs to the MurCDEF family.

Its subcellular location is the cytoplasm. It carries out the reaction UDP-N-acetyl-alpha-D-muramate + L-alanine + ATP = UDP-N-acetyl-alpha-D-muramoyl-L-alanine + ADP + phosphate + H(+). It participates in cell wall biogenesis; peptidoglycan biosynthesis. Its function is as follows. Cell wall formation. This is UDP-N-acetylmuramate--L-alanine ligase from Corynebacterium glutamicum (strain ATCC 13032 / DSM 20300 / JCM 1318 / BCRC 11384 / CCUG 27702 / LMG 3730 / NBRC 12168 / NCIMB 10025 / NRRL B-2784 / 534).